The primary structure comprises 398 residues: S-adenosylmethionine synthase (398 aa).

Residue 136–141 (GTGSSD) coordinates ATP.

This sequence belongs to the AdoMet synthase 2 family. It depends on Mg(2+) as a cofactor.

The enzyme catalyses L-methionine + ATP + H2O = S-adenosyl-L-methionine + phosphate + diphosphate. It functions in the pathway amino-acid biosynthesis; S-adenosyl-L-methionine biosynthesis; S-adenosyl-L-methionine from L-methionine: step 1/1. Its function is as follows. Catalyzes the formation of S-adenosylmethionine from methionine and ATP. This chain is S-adenosylmethionine synthase, found in Methanosarcina acetivorans (strain ATCC 35395 / DSM 2834 / JCM 12185 / C2A).